The chain runs to 96 residues: Complement inhibitor RaCI4 (96 aa).

The signal sequence occupies residues 1 to 24 (MSAFNIFALVVVVCALMINECCTS). Intrachain disulfides connect C37/C61, C42/C63, and C57/C78.

This sequence belongs to the RaCI family. In terms of tissue distribution, expressed in salivary glands.

Its subcellular location is the secreted. Functionally, complement inhibitor. Prevents complement-mediated C5 activation by binding to C5. Binds C5 at a different binding site than the other tick complement inhibitors OmCI and CirpT1, and the drug eculizumab. Inhibits complement in human and guinea pig but not in other species tested (rabbit, rat, mouse, and pig). The protein is Complement inhibitor RaCI4 of Hyalomma rufipes (Tick).